We begin with the raw amino-acid sequence, 121 residues long: NADPH-dependent 7-cyano-7-deazaguanine reductase (121 aa).

The active-site Thioimide intermediate is Cys-36. Asp-43 (proton donor) is an active-site residue. Residues 58–60 (VEL) and 77–78 (YE) each bind substrate.

Belongs to the GTP cyclohydrolase I family. QueF type 1 subfamily.

It localises to the cytoplasm. It carries out the reaction 7-aminomethyl-7-carbaguanine + 2 NADP(+) = 7-cyano-7-deazaguanine + 2 NADPH + 3 H(+). The protein operates within tRNA modification; tRNA-queuosine biosynthesis. In terms of biological role, catalyzes the NADPH-dependent reduction of 7-cyano-7-deazaguanine (preQ0) to 7-aminomethyl-7-deazaguanine (preQ1). The sequence is that of NADPH-dependent 7-cyano-7-deazaguanine reductase from Rhodopirellula baltica (strain DSM 10527 / NCIMB 13988 / SH1).